Here is a 385-residue protein sequence, read N- to C-terminus: Isomaltose glucohydrolase (385 aa).

Trp125 lines the substrate pocket. Catalysis depends on Asp175, which acts as the Proton acceptor. The active-site Proton donor is the Glu178. Glu335 functions as the Proton acceptor in the catalytic mechanism.

It belongs to the glycosyl hydrolase 15 family.

Its subcellular location is the cytoplasm. It catalyses the reaction isomaltose + H2O = beta-D-glucose + D-glucose. Its function is as follows. Involved in the intracellular degradation of the cyclic tetrasaccharide cyclobis-(1-6)-alpha-nigerosyl (CNN) formed extracellularly from starch. Catalyzes the hydrolysis of alpha-1,6-glucosidic linkage from the non-reducing end of isomaltose to yield beta-D-glucose and D-glucose. Can also act on panose and isomaltotriose at a lower rate. It displays low or no activity toward CNN and the general GH15 enzyme substrates such as maltose, soluble starch or dextran. The sequence is that of Isomaltose glucohydrolase from Kribbella flavida (strain DSM 17836 / JCM 10339 / NBRC 14399).